Here is a 145-residue protein sequence, read N- to C-terminus: Large ribosomal subunit protein uL13 (145 aa).

The protein belongs to the universal ribosomal protein uL13 family. Part of the 50S ribosomal subunit.

This protein is one of the early assembly proteins of the 50S ribosomal subunit, although it is not seen to bind rRNA by itself. It is important during the early stages of 50S assembly. The chain is Large ribosomal subunit protein uL13 from Brevibacillus brevis (strain 47 / JCM 6285 / NBRC 100599).